We begin with the raw amino-acid sequence, 3681 residues long: E3 ubiquitin-protein ligase UPL1 (3681 aa).

The span at 882–891 shows a compositional bias: basic and acidic residues; the sequence is DEKKSVDRGS. The disordered stretch occupies residues 882–912; that stretch reads DEKKSVDRGSDNSVSASSSTAERESDEDSSN. Low complexity predominate over residues 892-901; that stretch reads DNSVSASSST. The 42-residue stretch at 1269 to 1310 folds into the UBA domain; the sequence is QLDESIVGMIVEMGFSRSRAEIALRRVGTNSVEMAMDWLFTN. Residues 1316 to 1335 enclose the UIM domain; it reads QEDDELAQALALSLGNSSET. Disordered regions lie at residues 1332 to 1358, 1768 to 1802, 2015 to 2094, 2125 to 2151, 2253 to 2287, 2401 to 2435, 2483 to 2505, 2537 to 2606, 2975 to 3003, and 3228 to 3254; these read SSET…KEPP, MEVD…KAEI, EQLK…MRIE, ENRA…EDAD, RQTG…TASV, NTTE…QSEE, PLPL…DGAP, IAPP…APEV, SPSS…DAES, and TAGE…KTDG. 3 stretches are compositionally biased toward basic and acidic residues: residues 1336–1345, 1782–1802, and 2017–2037; these read PKLEDTEKPV, KVGE…KAEI, and LKSE…HDSH. A compositionally biased stretch (polar residues) spans 2038-2087; sequence GNSTETEADELNQNNSSLQQVTDAAGNGQEQAQVSSQSAGERGSSQTQAM. The segment covering 2130–2151 has biased composition (acidic residues); sequence DDVDDDMGDEGEDDEGDDEDAD. The segment covering 2253–2265 has biased composition (basic and acidic residues); it reads RQTGRSSLDRSGS. Polar residues predominate over residues 2277–2287; that stretch reads RPSQTGNTASV. Serine 2598 is subject to Phosphoserine. Residues 2982–3002 show a composition bias toward basic and acidic residues; the sequence is EKLENKPVGEEASSETRKDAE. Positions 3237 to 3247 are enriched in polar residues; it reads AHGSSSKTSVD. The 342-residue stretch at 3340-3681 folds into the HECT domain; that stretch reads SPQDLKGRLN…HEASEGFGFA (342 aa). The active-site Glycyl thioester intermediate is cysteine 3648.

Belongs to the UPL family. TOM1/PTR1 subfamily. In terms of tissue distribution, widely expressed. Expressed in root, stem, cauline and rosette leaf, seedling and flower (at protein level).

The enzyme catalyses S-ubiquitinyl-[E2 ubiquitin-conjugating enzyme]-L-cysteine + [acceptor protein]-L-lysine = [E2 ubiquitin-conjugating enzyme]-L-cysteine + N(6)-ubiquitinyl-[acceptor protein]-L-lysine.. It functions in the pathway protein modification; protein ubiquitination. Functionally, probable E3 ubiquitin-protein ligase which mediates ubiquitination and subsequent proteasomal degradation of target proteins. This Arabidopsis thaliana (Mouse-ear cress) protein is E3 ubiquitin-protein ligase UPL1 (UPL1).